Here is a 461-residue protein sequence, read N- to C-terminus: tRNA modification GTPase MnmE (461 aa).

Residues lysine 32, glutamate 89, and lysine 128 each contribute to the (6S)-5-formyl-5,6,7,8-tetrahydrofolate site. Residues 224–387 form the TrmE-type G domain; the sequence is GHALSIVGKP…LSQKISAFFP (164 aa). Residue asparagine 234 coordinates K(+). Residues 234–239, 253–259, and 278–281 each bind GTP; these read NAGKSS, SDIKGTT, and DTAG. Serine 238 is a binding site for Mg(2+). K(+)-binding residues include serine 253, isoleucine 255, and threonine 258. Threonine 259 contacts Mg(2+). Lysine 461 contacts (6S)-5-formyl-5,6,7,8-tetrahydrofolate.

This sequence belongs to the TRAFAC class TrmE-Era-EngA-EngB-Septin-like GTPase superfamily. TrmE GTPase family. As to quaternary structure, homodimer. Heterotetramer of two MnmE and two MnmG subunits. K(+) serves as cofactor.

The protein localises to the cytoplasm. Exhibits a very high intrinsic GTPase hydrolysis rate. Involved in the addition of a carboxymethylaminomethyl (cmnm) group at the wobble position (U34) of certain tRNAs, forming tRNA-cmnm(5)s(2)U34. This is tRNA modification GTPase MnmE from Helicobacter pylori (strain ATCC 700392 / 26695) (Campylobacter pylori).